The primary structure comprises 133 residues: Interferon alpha-inducible protein 27-like protein 2 (133 aa).

The next 3 helical transmembrane spans lie at 8–28, 51–71, and 73–93; these read AAIG…AVGF, GGGV…AAGL, and TSSN…LGGA. Residues 93 to 133 form a disordered region; that stretch reads AKRASPSPPPGGPRPEGEQPGENVPQVEPPKSPLGPEKHEK.

Belongs to the IFI6/IFI27 family.

It is found in the mitochondrion membrane. Functionally, plays a role in the apoptotic process and has a pro-apoptotic activity. This chain is Interferon alpha-inducible protein 27-like protein 2, found in Bos taurus (Bovine).